We begin with the raw amino-acid sequence, 100 residues long: Large ribosomal subunit protein uL23 (100 aa).

Belongs to the universal ribosomal protein uL23 family. In terms of assembly, part of the 50S ribosomal subunit. Contacts protein L29, and trigger factor when it is bound to the ribosome.

Its function is as follows. One of the early assembly proteins it binds 23S rRNA. One of the proteins that surrounds the polypeptide exit tunnel on the outside of the ribosome. Forms the main docking site for trigger factor binding to the ribosome. This is Large ribosomal subunit protein uL23 from Synechococcus sp. (strain RCC307).